We begin with the raw amino-acid sequence, 298 residues long: Tyrosine recombinase XerC (298 aa).

The Core-binding (CB) domain occupies 1 to 84; sequence MNHIQEAFLN…TLRTFYEYWM (84 aa). Residues 105–286 form the Tyr recombinase domain; the sequence is YLPQFFYEEE…SNQQLRKVYL (182 aa). Active-site residues include Arg145, Lys169, His238, Arg241, and His264. Tyr273 acts as the O-(3'-phospho-DNA)-tyrosine intermediate in catalysis.

Belongs to the 'phage' integrase family. XerC subfamily. As to quaternary structure, forms a cyclic heterotetrameric complex composed of two molecules of XerC and two molecules of XerD.

The protein localises to the cytoplasm. In terms of biological role, site-specific tyrosine recombinase, which acts by catalyzing the cutting and rejoining of the recombining DNA molecules. The XerC-XerD complex is essential to convert dimers of the bacterial chromosome into monomers to permit their segregation at cell division. It also contributes to the segregational stability of plasmids. This Staphylococcus aureus (strain bovine RF122 / ET3-1) protein is Tyrosine recombinase XerC.